The sequence spans 2062 residues: Ankyrin repeat domain-containing protein 12 (2062 aa).

Disordered regions lie at residues Met-1–Lys-119 and Ala-145–Pro-188. Polar residues predominate over residues Pro-9–Asn-20. Basic and acidic residues-rich tracts occupy residues Pro-41–Ser-57 and Tyr-100–Asn-117. Positions Ala-145–Ser-172 are enriched in polar residues. Ser-149 carries the phosphoserine modification. Residues Arg-173 to Thr-187 show a composition bias toward basic and acidic residues. ANK repeat units follow at residues Arg-184–Val-213, Ala-217–Thr-246, and Asp-250–Ala-280. Disordered regions lie at residues Lys-301 to Asp-338, Lys-409 to Thr-501, Ile-538 to Gln-577, Gln-609 to Lys-683, Glu-727 to Leu-788, Glu-812 to Asp-1073, Lys-1097 to Val-1227, and Glu-1328 to Val-1350. Residues Leu-306–Glu-318 are compositionally biased toward acidic residues. 2 stretches are compositionally biased toward polar residues: residues Ala-319–Asp-328 and Lys-437–Met-454. Residues Gln-455–Lys-467 show a composition bias toward basic and acidic residues. Positions Gln-468–Asn-480 are enriched in basic residues. Positions Lys-481–Thr-498 are enriched in basic and acidic residues. Ser-543 is subject to Phosphoserine. The segment covering Thr-565–Ser-575 has biased composition (polar residues). 8 stretches are compositionally biased toward basic and acidic residues: residues Gln-609–Pro-631, Thr-639–Thr-649, Lys-658–Lys-683, Glu-727–Glu-784, Glu-812–Ser-969, His-977–Ile-1037, Lys-1061–Asn-1072, and Lys-1103–Lys-1157. Ser-630 is modified (phosphoserine). Position 861 is a phosphoserine (Ser-861). Residues Ser-1161 to Ser-1189 show a composition bias toward polar residues. Residues Ser-1200–Glu-1213 are compositionally biased toward low complexity. Polar residues predominate over residues Glu-1328–Pro-1344. Ser-1401 carries the phosphoserine modification. Disordered regions lie at residues Asn-1721–Ala-1744 and Leu-1756–Pro-1795. The span at Asn-1729–Ala-1744 shows a compositional bias: polar residues.

In terms of assembly, interacts with the PAS region of the p160 coactivators.

The protein localises to the nucleus. May recruit HDACs to the p160 coactivators/nuclear receptor complex to inhibit ligand-dependent transactivation. The sequence is that of Ankyrin repeat domain-containing protein 12 (ANKRD12) from Homo sapiens (Human).